The sequence spans 744 residues: MELEKVKINSLHCNDAVLSSHQPSPSATHPQSVPSKANAVTEASIIEKTNLQHNVQEDNSYNRDCDSPVSSSSEPEKELDDLRYLHSSSLTNSVVVGKSTGSLNGAYSITSVTSKTKTLEPNSASGSACLTIAPTADHIKKRIPSSRTPTRKALRIKFYRNGDRFYPGITIPVSNERYRSFERLFEDLTRLLEENVKIPGAVRTIYNMCGKKITSLDELEDGQSYVCSCNNENFKKVEYNTGSQPLSNLTLTNSRSNSHRLAKCRPSSPLKNGLLAGSNPLPTCGGGTGNGSPHIASRSSDRVTVVHPRIVTLIRSGTKPRRIMRLLLNKRNSPSFDHVLTAITQVVRLDTGYVRKVFTLSGVSVVRLSDFFGSDDVFFAYGTERINTAEDFKLEAEEHRAINVIRKTMRTTGTTCKGPKPKMPIKSKKVYPPVVDSEAFKAATTPEDDRHAALLTSTGMEINELPSNIRNTYTLGRIIGDGNFAIVFKIKHRQTGHSYALKIIDKNKCKGKEHYIDAEVRVMKKLNHPHIISLILSVDQNTNMYLVLEYVSGGDLFDAITQVTRFSESQSRIMIRHLGAAMTYLHSMGIVHRDIKPENLLVKLDEHGHVLELKLADFGLACEVNDLLYAVCGTPTYVAPEILLEVGYGLKIDVWAAGIILYILLCGFPPFVAPDNQQEPLFDAIISGIYEFPDPYWSDIGDGVRDLIANMLQADPDVRFTSEDILDHPWTIGNQGNECTTYKR.

The segment covering 17–35 (VLSSHQPSPSATHPQSVPS) has biased composition (polar residues). Disordered stretches follow at residues 17–38 (VLSS…SKAN) and 54–78 (NVQE…PEKE). Doublecortin domains lie at 154–240 (LRIK…VEYN) and 309–392 (RIVT…AEDF). The 259-residue stretch at 473-731 (YTLGRIIGDG…SEDILDHPWT (259 aa)) folds into the Protein kinase domain. ATP is bound by residues 479 to 487 (IGDGNFAIV) and lysine 502. Residue aspartate 594 is the Proton acceptor of the active site.

This sequence belongs to the protein kinase superfamily. CAMK Ser/Thr protein kinase family. CaMK subfamily.

It catalyses the reaction L-seryl-[protein] + ATP = O-phospho-L-seryl-[protein] + ADP + H(+). The catalysed reaction is L-threonyl-[protein] + ATP = O-phospho-L-threonyl-[protein] + ADP + H(+). The sequence is that of Serine/threonine-protein kinase GM11705 from Drosophila sechellia (Fruit fly).